A 519-amino-acid polypeptide reads, in one-letter code: Membrane protein insertase YidC (519 aa).

Transmembrane regions (helical) follow at residues 6–26 (ILFV…FAQP), 298–318 (VDFG…VFFY), 324–344 (YGWA…PLTL), 390–410 (LGGC…FTML), 434–454 (FMQF…IGMF), and 471–491 (IMYI…SGLV).

This sequence belongs to the OXA1/ALB3/YidC family. Type 1 subfamily. In terms of assembly, interacts with the Sec translocase complex via SecD. Specifically interacts with transmembrane segments of nascent integral membrane proteins during membrane integration.

The protein localises to the cell inner membrane. Its function is as follows. Required for the insertion and/or proper folding and/or complex formation of integral membrane proteins into the membrane. Involved in integration of membrane proteins that insert both dependently and independently of the Sec translocase complex, as well as at least some lipoproteins. Aids folding of multispanning membrane proteins. The polypeptide is Membrane protein insertase YidC (Endomicrobium trichonymphae).